Reading from the N-terminus, the 147-residue chain is Small ribosomal subunit protein uS12 (147 aa).

This sequence belongs to the universal ribosomal protein uS12 family. Part of the 30S ribosomal subunit.

Functionally, with S4 and S5 plays an important role in translational accuracy. Located at the interface of the 30S and 50S subunits. This is Small ribosomal subunit protein uS12 from Hyperthermus butylicus (strain DSM 5456 / JCM 9403 / PLM1-5).